Reading from the N-terminus, the 160-residue chain is Cytochrome b6-f complex subunit 4 (160 aa).

3 consecutive transmembrane segments (helical) span residues 36-56, 95-115, and 131-151; these read LLYVFPLTMLGTLTCIVGLSV, LLGVLAMAAVPLGLITVPFIE, and LTFIFGFFTAVWLGIGACVPI.

It belongs to the cytochrome b family. PetD subfamily. As to quaternary structure, the 4 large subunits of the cytochrome b6-f complex are cytochrome b6, subunit IV (17 kDa polypeptide, petD), cytochrome f and the Rieske protein, while the 4 small subunits are petG, petL, petM and petN. The complex functions as a dimer.

It is found in the plastid. Its subcellular location is the chloroplast thylakoid membrane. Functionally, component of the cytochrome b6-f complex, which mediates electron transfer between photosystem II (PSII) and photosystem I (PSI), cyclic electron flow around PSI, and state transitions. The polypeptide is Cytochrome b6-f complex subunit 4 (Phaeodactylum tricornutum (strain CCAP 1055/1)).